A 263-amino-acid chain; its full sequence is Methylesterase 2 (263 aa).

Serine 85 acts as the Acyl-ester intermediate in catalysis. Catalysis depends on charge relay system residues aspartate 213 and histidine 241.

The protein belongs to the AB hydrolase superfamily. Methylesterase family.

It carries out the reaction methyl (indol-3-yl)acetate + H2O = (indol-3-yl)acetate + methanol + H(+). The catalysed reaction is methyl (-)-jasmonate + H2O = jasmonate + methanol + H(+). It catalyses the reaction methyl salicylate + H2O = salicylate + methanol + H(+). It participates in plant hormone biosynthesis. Its pathway is lipid metabolism; oxylipin biosynthesis. Its activity is regulated as follows. Esterase activity is down-regulated by salicylic acid (SA). Down-regulated by agrochemicals Paraoxon, 3,4-DCl and Profenofos. Functionally, methylesterase shown to have carboxylesterase activity, methyl indole-3-acetic acid (MeIAA) esterase activity, methyl salicylate (MeSA) esterase activity and methyl jasmonate (MeJA) esterase activity in vitro. The polypeptide is Methylesterase 2 (Arabidopsis thaliana (Mouse-ear cress)).